The chain runs to 393 residues: Elongation factor Tu (393 aa).

Positions 10-203 constitute a tr-type G domain; that stretch reads KPHVNIGTIG…AVDDYIPEPV (194 aa). The tract at residues 19 to 26 is G1; it reads GHVDHGKT. Position 19 to 26 (19 to 26) interacts with GTP; the sequence is GHVDHGKT. Threonine 26 contacts Mg(2+). Residues 60 to 64 are G2; that stretch reads GITIS. The G3 stretch occupies residues 81–84; that stretch reads DCPG. Residues 81 to 85 and 136 to 139 contribute to the GTP site; these read DCPGH and NKVD. A G4 region spans residues 136 to 139; that stretch reads NKVD. Positions 173–175 are G5; sequence SAL.

It belongs to the TRAFAC class translation factor GTPase superfamily. Classic translation factor GTPase family. EF-Tu/EF-1A subfamily. As to quaternary structure, monomer.

It is found in the cytoplasm. It carries out the reaction GTP + H2O = GDP + phosphate + H(+). Functionally, GTP hydrolase that promotes the GTP-dependent binding of aminoacyl-tRNA to the A-site of ribosomes during protein biosynthesis. In Chlorobaculum parvum (strain DSM 263 / NCIMB 8327) (Chlorobium vibrioforme subsp. thiosulfatophilum), this protein is Elongation factor Tu.